A 72-amino-acid polypeptide reads, in one-letter code: Translation initiation factor IF-1 (72 aa).

Residues 1-72 (MAREDHIEME…SKGRIVYRAR (72 aa)) form the S1-like domain.

The protein belongs to the IF-1 family. In terms of assembly, component of the 30S ribosomal translation pre-initiation complex which assembles on the 30S ribosome in the order IF-2 and IF-3, IF-1 and N-formylmethionyl-tRNA(fMet); mRNA recruitment can occur at any time during PIC assembly.

It localises to the cytoplasm. Functionally, one of the essential components for the initiation of protein synthesis. Stabilizes the binding of IF-2 and IF-3 on the 30S subunit to which N-formylmethionyl-tRNA(fMet) subsequently binds. Helps modulate mRNA selection, yielding the 30S pre-initiation complex (PIC). Upon addition of the 50S ribosomal subunit IF-1, IF-2 and IF-3 are released leaving the mature 70S translation initiation complex. This chain is Translation initiation factor IF-1, found in Chromohalobacter salexigens (strain ATCC BAA-138 / DSM 3043 / CIP 106854 / NCIMB 13768 / 1H11).